Consider the following 115-residue polypeptide: MDRNEIFEKIMRLEMNVNQLSKETSELKALAVELVEENVALQLENDNLKKVLGNDEPTTIDTANSKPAKAVKKPLPSKDNLAILYGEGFHICKGELFGKHRHGEDCLFCLEVLSD.

Positions 90, 92, 106, and 109 each coordinate Zn(2+).

Belongs to the YabA family. As to quaternary structure, homotetramer. Interacts with both DnaA and DnaN, acting as a bridge between these two proteins. It depends on Zn(2+) as a cofactor.

The protein resides in the cytoplasm. The protein localises to the nucleoid. Involved in control of chromosome replication initiation. Inhibits the cooperative binding of DnaA to the oriC region, thus negatively regulating initiation of chromosome replication. Inhibits the ability of DnaA-ATP to form a helix on DNA; does not disassemble preformed DnaA-DNA helices. Decreases the residence time of DnaA on the chromosome at its binding sites (oriC, replication forks and promoter-binding sites). Tethers DnaA to the replication machinery via the DNA polymerase beta sliding clamp subunit (dnaN). Associates with oriC and other DnaA targets on the chromosome in a DnaA-dependent manner. This Staphylococcus aureus (strain bovine RF122 / ET3-1) protein is Replication initiation control protein YabA.